A 1028-amino-acid polypeptide reads, in one-letter code: Unconventional myosin-Ic (1028 aa).

M1 is subject to N-acetylmethionine. One can recognise a Myosin motor domain in the interval 12–696 (GVQDFVLLEN…TLFATEDALE (685 aa)). Residues N53, Y61, 104-113 (SGESGAGKTE), and 157-161 (NDNSS) each bind ATP. K348 carries the post-translational modification N6-methyllysine. An actin-binding region spans residues 573–595 (LSKLMEILMSKQPSYVRCIKPND). IQ domains are found at residues 699–728 (KHSI…SAVE) and 722–751 (MKHS…AVDV). The region spanning 850–1024 (KDNYPQSVPR…NGHLSVVAPR (175 aa)) is the TH1 domain.

This sequence belongs to the TRAFAC class myosin-kinesin ATPase superfamily. Myosin family. As to quaternary structure, interacts (via its IQ motifs) with calmodulin. Expressed in brain and the sacculus of the internal ear.

The protein localises to the cytoplasm. It is found in the cell membrane. The protein resides in the cell projection. Its subcellular location is the ruffle membrane. It localises to the cytoplasmic vesicle. The protein localises to the stereocilium membrane. Its function is as follows. Myosins are actin-based motor molecules with ATPase activity. Unconventional myosins serve in intracellular movements. Their highly divergent tails are presumed to bind to membranous compartments, which would be moved relative to actin filaments. The protein is Unconventional myosin-Ic (Myo1c) of Aquarana catesbeiana (American bullfrog).